Consider the following 620-residue polypeptide: MDSHTLVQALIYLGSAALIVPIAVRLGLGSVLGYLIAGCIIGPWGLRLVTDAESILHFAEIGVVLMLFIIGLELDPQRLWKLRAAVFGGGALQMVICGGLLGLFCMLLGLRWQVAELIGMTLALSSTAIAMQAMNERNLMVTQMGRSAFAVLLFQDIAAIPLVAMIPLLAASSASTTMGAFALSALKVAGALVLVVLLGRYVTRPALRFVARSGLREVFSAVALFLVFGFGLLLEEVGLSMAMGAFLAGVLLASSEYRHALESDIEPFKGLLLGLFFIGVGMSIDFGTLIENPLRIVILLLGFLIIKIAMLWLIARPLQVPNKQRRWFAVLLGQGSEFAFVVFGAAQMANVLEPEWAKSLTLAVALSMAATPILLVILNRLEQSSTEEAREADEIDEEQPRVIIAGFGRFGQITGRLLLSSGVKMVVLDHDPDHIETLRKFGMKVFYGDATRMDLLESAGAAKAEVLINAIDDPQTNLQLTEMVKEHFPHLQIIARARDVDHYICLRQAGVEKPERETFEGALKTGRLALESLGLGPYEARERADVFRRFNIQMVEEMAMVENDTKARAAVYKRTSAMLSEIITEDREHLSLIQRHGWQGTEEGKHTGNMADEPETKPSS.

Residues 1–3 lie on the Periplasmic side of the membrane; sequence MDS. A helical membrane pass occupies residues 4-24; that stretch reads HTLVQALIYLGSAALIVPIAV. Residue arginine 25 is a topological domain, cytoplasmic. A helical membrane pass occupies residues 26–46; it reads LGLGSVLGYLIAGCIIGPWGL. The Periplasmic portion of the chain corresponds to 47 to 53; it reads RLVTDAE. The chain crosses the membrane as a helical span at residues 54–74; the sequence is SILHFAEIGVVLMLFIIGLEL. Topologically, residues 75–89 are cytoplasmic; that stretch reads DPQRLWKLRAAVFGG. The chain crosses the membrane as a helical span at residues 90–110; sequence GALQMVICGGLLGLFCMLLGL. At 111–113 the chain is on the periplasmic side; the sequence is RWQ. Residues 114-134 traverse the membrane as a helical segment; that stretch reads VAELIGMTLALSSTAIAMQAM. Residues 135 to 148 lie on the Cytoplasmic side of the membrane; the sequence is NERNLMVTQMGRSA. Residues 149-169 form a helical membrane-spanning segment; it reads FAVLLFQDIAAIPLVAMIPLL. The Periplasmic segment spans residues 170–177; sequence AASSASTT. A helical membrane pass occupies residues 178-198; that stretch reads MGAFALSALKVAGALVLVVLL. Residues 199–213 lie on the Cytoplasmic side of the membrane; it reads GRYVTRPALRFVARS. The helical transmembrane segment at 214–233 threads the bilayer; it reads GLREVFSAVALFLVFGFGLL. Topologically, residues 234–236 are periplasmic; the sequence is LEE. A helical transmembrane segment spans residues 237 to 254; that stretch reads VGLSMAMGAFLAGVLLAS. Topologically, residues 255 to 269 are cytoplasmic; sequence SEYRHALESDIEPFK. A helical membrane pass occupies residues 270-290; that stretch reads GLLLGLFFIGVGMSIDFGTLI. Residues 291-293 lie on the Periplasmic side of the membrane; sequence ENP. Residues 294-314 traverse the membrane as a helical segment; that stretch reads LRIVILLLGFLIIKIAMLWLI. Residues 315 to 326 lie on the Cytoplasmic side of the membrane; sequence ARPLQVPNKQRR. Residues 327–347 traverse the membrane as a helical segment; that stretch reads WFAVLLGQGSEFAFVVFGAAQ. At 348–358 the chain is on the periplasmic side; it reads MANVLEPEWAK. A helical transmembrane segment spans residues 359-379; it reads SLTLAVALSMAATPILLVILN. The Cytoplasmic segment spans residues 380 to 620; the sequence is RLEQSSTEEA…ADEPETKPSS (241 aa). One can recognise an RCK N-terminal domain in the interval 399-518; that stretch reads QPRVIIAGFG…AGVEKPERET (120 aa). A disordered region spans residues 597-620; the sequence is GWQGTEEGKHTGNMADEPETKPSS.

It belongs to the monovalent cation:proton antiporter 2 (CPA2) transporter (TC 2.A.37) family. KefC subfamily. Homodimer. Interacts with the regulatory subunit KefF.

It localises to the cell inner membrane. Pore-forming subunit of a potassium efflux system that confers protection against electrophiles. Catalyzes K(+)/H(+) antiport. The polypeptide is Glutathione-regulated potassium-efflux system protein KefC (Escherichia coli O157:H7).